The chain runs to 250 residues: Triosephosphate isomerase, glycosomal (250 aa).

Residues asparagine 11 and lysine 13 each coordinate substrate. The active-site Electrophile is the histidine 95. Glutamate 167 serves as the catalytic Proton acceptor.

Belongs to the triosephosphate isomerase family. As to quaternary structure, homodimer.

Its subcellular location is the glycosome. It carries out the reaction D-glyceraldehyde 3-phosphate = dihydroxyacetone phosphate. The protein operates within carbohydrate biosynthesis; gluconeogenesis. It functions in the pathway carbohydrate degradation; glycolysis; D-glyceraldehyde 3-phosphate from glycerone phosphate: step 1/1. The chain is Triosephosphate isomerase, glycosomal from Trypanosoma brucei brucei.